Consider the following 218-residue polypeptide: Fibroblast growth factor 15 (218 aa).

An N-terminal signal peptide occupies residues 1–25; sequence MARKWNGRAVARALVLATLWLAVSG.

Belongs to the heparin-binding growth factors family. In terms of assembly, interacts with MALRD1. As to expression, expressed in the developing brain.

It is found in the secreted. Functionally, involved in the suppression of bile acid biosynthesis through down-regulation of CYP7A1 expression. This is Fibroblast growth factor 15 (Fgf15) from Mus musculus (Mouse).